The primary structure comprises 376 residues: N-acetyldiaminopimelate deacetylase (376 aa).

Aspartate 69 is an active-site residue. The active-site Proton acceptor is the glutamate 128.

The protein belongs to the peptidase M20A family. N-acetyldiaminopimelate deacetylase subfamily.

The enzyme catalyses N-acetyl-(2S,6S)-2,6-diaminopimelate + H2O = (2S,6S)-2,6-diaminopimelate + acetate. It functions in the pathway amino-acid biosynthesis; L-lysine biosynthesis via DAP pathway; LL-2,6-diaminopimelate from (S)-tetrahydrodipicolinate (acetylase route): step 3/3. Functionally, catalyzes the conversion of N-acetyl-diaminopimelate to diaminopimelate and acetate. The chain is N-acetyldiaminopimelate deacetylase from Streptococcus pneumoniae (strain JJA).